Consider the following 632-residue polypeptide: Transcription factor asR4 (632 aa).

The segment at residues Cys26–Cys52 is a DNA-binding region (zn(2)-C6 fungal-type). Residues His101–Ser111 are compositionally biased toward polar residues. Disordered stretches follow at residues His101–Gln129, Ser270–His311, and Thr324–Thr356. A compositionally biased stretch (low complexity) spans Gln112–Gln129. 3 stretches are compositionally biased toward polar residues: residues Ser270–Asp286, Pro294–Val306, and Ile329–Val340.

It is found in the nucleus. In terms of biological role, transcription factor; part of the gene cluster that mediates the biosynthesis of xenovulene A, an unusual meroterpenoid that has potent inhibitory effects on the human gamma-aminobutyrate A (GABAA) benzodiazepine receptor. The protein is Transcription factor asR4 of Sarocladium schorii (Acremonium strictum (strain IMI 501407)).